The chain runs to 108 residues: uncharacterized protein (108 aa).

Residues 1-15 are compositionally biased toward polar residues; that stretch reads MSDSNSRLVYSTQTG. A disordered region spans residues 1–29; sequence MSDSNSRLVYSTQTGRIEEPKTAPVRPKG. Over residues 16–29 the composition is skewed to basic and acidic residues; it reads RIEEPKTAPVRPKG.

It belongs to the SUI1 family.

This is an uncharacterized protein from Salmonella typhi.